Consider the following 283-residue polypeptide: Pantothenate synthetase (283 aa).

30–37 (MGNLHDGH) serves as a coordination point for ATP. The Proton donor role is filled by His-37. Residue Gln-61 coordinates (R)-pantoate. Gln-61 contributes to the beta-alanine binding site. 149–152 (GEKD) contacts ATP. Residue Gln-155 coordinates (R)-pantoate. An ATP-binding site is contributed by 186-189 (LSSR).

Belongs to the pantothenate synthetase family. Homodimer.

The protein resides in the cytoplasm. The enzyme catalyses (R)-pantoate + beta-alanine + ATP = (R)-pantothenate + AMP + diphosphate + H(+). It participates in cofactor biosynthesis; (R)-pantothenate biosynthesis; (R)-pantothenate from (R)-pantoate and beta-alanine: step 1/1. In terms of biological role, catalyzes the condensation of pantoate with beta-alanine in an ATP-dependent reaction via a pantoyl-adenylate intermediate. In Escherichia fergusonii (strain ATCC 35469 / DSM 13698 / CCUG 18766 / IAM 14443 / JCM 21226 / LMG 7866 / NBRC 102419 / NCTC 12128 / CDC 0568-73), this protein is Pantothenate synthetase.